A 359-amino-acid chain; its full sequence is Palmitoyltransferase ERF2 (359 aa).

Positions Met-1–His-21 are disordered. The Cytoplasmic portion of the chain corresponds to Met-1–Pro-75. A helical membrane pass occupies residues Leu-76–Ala-96. Residues His-97–Asn-104 are Lumenal-facing. A helical membrane pass occupies residues Gly-105 to Ile-125. Residues Arg-126–Phe-217 lie on the Cytoplasmic side of the membrane. In terms of domain architecture, DHHC spans Lys-173 to Leu-223. Cys-203 (S-palmitoyl cysteine intermediate) is an active-site residue. The chain crosses the membrane as a helical span at residues Phe-218–Ile-238. Over His-239 to Cys-250 the chain is Lumenal. The chain crosses the membrane as a helical span at residues Pro-251–Phe-271. Residues Thr-272 to Ile-359 lie on the Cytoplasmic side of the membrane.

The protein belongs to the DHHC palmitoyltransferase family. ERF2/ZDHHC9 subfamily. Interacts with SHR5. In terms of processing, autopalmitoylated.

The protein resides in the endoplasmic reticulum membrane. The catalysed reaction is L-cysteinyl-[protein] + hexadecanoyl-CoA = S-hexadecanoyl-L-cysteinyl-[protein] + CoA. In terms of biological role, the ERF2-SHR5 complex is a palmitoyltransferase specific for Ras proteins. Palmitoylates RAS2, which is required for its proper plasma membrane localization. This is Palmitoyltransferase ERF2 (ERF2) from Saccharomyces cerevisiae (strain ATCC 204508 / S288c) (Baker's yeast).